The primary structure comprises 681 residues: UvrABC system protein B (681 aa).

The Helicase ATP-binding domain maps to 32–419 (ARLSRGERDV…GGEYVEQVIR (388 aa)). 45 to 52 (GATGTGKS) lines the ATP pocket. The short motif at 98 to 121 (YYDYYQPEAYIAQTDTYIEKDSSI) is the Beta-hairpin element. The 167-residue stretch at 436 to 602 (QIDDLIHEIK…PLRKKIADIL (167 aa)) folds into the Helicase C-terminal domain. A compositionally biased stretch (polar residues) spans 607–616 (ESKAESTAPS). The interval 607-626 (ESKAESTAPSSDAVVVSKTN) is disordered. Residues 636–671 (RSLIDDLTTQMGTAARELKFELAGRLRDEIAELKKE) enclose the UVR domain.

This sequence belongs to the UvrB family. In terms of assembly, forms a heterotetramer with UvrA during the search for lesions. Interacts with UvrC in an incision complex.

It localises to the cytoplasm. In terms of biological role, the UvrABC repair system catalyzes the recognition and processing of DNA lesions. A damage recognition complex composed of 2 UvrA and 2 UvrB subunits scans DNA for abnormalities. Upon binding of the UvrA(2)B(2) complex to a putative damaged site, the DNA wraps around one UvrB monomer. DNA wrap is dependent on ATP binding by UvrB and probably causes local melting of the DNA helix, facilitating insertion of UvrB beta-hairpin between the DNA strands. Then UvrB probes one DNA strand for the presence of a lesion. If a lesion is found the UvrA subunits dissociate and the UvrB-DNA preincision complex is formed. This complex is subsequently bound by UvrC and the second UvrB is released. If no lesion is found, the DNA wraps around the other UvrB subunit that will check the other stand for damage. This chain is UvrABC system protein B, found in Corynebacterium diphtheriae (strain ATCC 700971 / NCTC 13129 / Biotype gravis).